Here is a 216-residue protein sequence, read N- to C-terminus: Glycerol-3-phosphate acyltransferase (216 aa).

Transmembrane regions (helical) follow at residues 4–24, 56–76, 80–100, 112–132, and 138–158; these read IALG…AILV, VAVL…AYLL, PLYL…PVFF, FGAI…TWLL, and GYSS…VWWF.

It belongs to the PlsY family. As to quaternary structure, probably interacts with PlsX.

The protein localises to the cell inner membrane. The catalysed reaction is an acyl phosphate + sn-glycerol 3-phosphate = a 1-acyl-sn-glycero-3-phosphate + phosphate. The protein operates within lipid metabolism; phospholipid metabolism. Catalyzes the transfer of an acyl group from acyl-phosphate (acyl-PO(4)) to glycerol-3-phosphate (G3P) to form lysophosphatidic acid (LPA). This enzyme utilizes acyl-phosphate as fatty acyl donor, but not acyl-CoA or acyl-ACP. This Yersinia pseudotuberculosis serotype O:1b (strain IP 31758) protein is Glycerol-3-phosphate acyltransferase.